The chain runs to 709 residues: UvrABC system protein B (709 aa).

The Helicase ATP-binding domain maps to 35–416 (ERVEAGEKDV…YELGQADGYV (382 aa)). 48–55 (GATGTGKS) provides a ligand contact to ATP. A Beta-hairpin motif is present at residues 101-124 (YYDYYQPEAYVPQTDTFIEKDSSI). In terms of domain architecture, Helicase C-terminal spans 438–604 (QIDDLLEQIR…PLRKRIADIT (167 aa)). The UVR domain maps to 666–701 (ADLIEQMSQQMHQAAADLQFELAARLRDEVGELKKE).

Belongs to the UvrB family. Forms a heterotetramer with UvrA during the search for lesions. Interacts with UvrC in an incision complex.

The protein resides in the cytoplasm. In terms of biological role, the UvrABC repair system catalyzes the recognition and processing of DNA lesions. A damage recognition complex composed of 2 UvrA and 2 UvrB subunits scans DNA for abnormalities. Upon binding of the UvrA(2)B(2) complex to a putative damaged site, the DNA wraps around one UvrB monomer. DNA wrap is dependent on ATP binding by UvrB and probably causes local melting of the DNA helix, facilitating insertion of UvrB beta-hairpin between the DNA strands. Then UvrB probes one DNA strand for the presence of a lesion. If a lesion is found the UvrA subunits dissociate and the UvrB-DNA preincision complex is formed. This complex is subsequently bound by UvrC and the second UvrB is released. If no lesion is found, the DNA wraps around the other UvrB subunit that will check the other stand for damage. The chain is UvrABC system protein B from Micrococcus luteus (strain ATCC 4698 / DSM 20030 / JCM 1464 / CCM 169 / CCUG 5858 / IAM 1056 / NBRC 3333 / NCIMB 9278 / NCTC 2665 / VKM Ac-2230) (Micrococcus lysodeikticus).